A 399-amino-acid polypeptide reads, in one-letter code: Enolase (399 aa).

Q149 contacts (2R)-2-phosphoglycerate. Catalysis depends on E191, which acts as the Proton donor. Mg(2+)-binding residues include D227, E268, and D293. (2R)-2-phosphoglycerate is bound by residues K318, R347, S348, and K369. Residue K318 is the Proton acceptor of the active site.

The protein belongs to the enolase family. Requires Mg(2+) as cofactor.

The protein localises to the cytoplasm. It localises to the secreted. The protein resides in the cell surface. It catalyses the reaction (2R)-2-phosphoglycerate = phosphoenolpyruvate + H2O. It functions in the pathway carbohydrate degradation; glycolysis; pyruvate from D-glyceraldehyde 3-phosphate: step 4/5. Functionally, catalyzes the reversible conversion of 2-phosphoglycerate (2-PG) into phosphoenolpyruvate (PEP). It is essential for the degradation of carbohydrates via glycolysis. In Archaeoglobus fulgidus (strain ATCC 49558 / DSM 4304 / JCM 9628 / NBRC 100126 / VC-16), this protein is Enolase.